A 336-amino-acid polypeptide reads, in one-letter code: 3-isopropylmalate dehydrogenase (336 aa).

Substrate-binding residues include arginine 87, arginine 97, arginine 121, and aspartate 211. Positions 211, 235, and 239 each coordinate Mg(2+). Residue 271–283 coordinates NAD(+); the sequence is GSAPDIAGQGIAD.

This sequence belongs to the isocitrate and isopropylmalate dehydrogenases family. LeuB type 2 subfamily. As to quaternary structure, homodimer. Mg(2+) is required as a cofactor. It depends on Mn(2+) as a cofactor.

It is found in the cytoplasm. It carries out the reaction (2R,3S)-3-isopropylmalate + NAD(+) = 4-methyl-2-oxopentanoate + CO2 + NADH. The protein operates within amino-acid biosynthesis; L-leucine biosynthesis; L-leucine from 3-methyl-2-oxobutanoate: step 3/4. In terms of biological role, catalyzes the oxidation of 3-carboxy-2-hydroxy-4-methylpentanoate (3-isopropylmalate) to 3-carboxy-4-methyl-2-oxopentanoate. The product decarboxylates to 4-methyl-2 oxopentanoate. This is 3-isopropylmalate dehydrogenase from Mycolicibacterium gilvum (strain PYR-GCK) (Mycobacterium gilvum (strain PYR-GCK)).